The sequence spans 276 residues: MKFIFEKYYRHPINKYNGSKITPISQKNIFVVIKVELDDNELNNIHDEAKKLAEDVCEKNPSGDIRTEERKLLSSFCGLIAEKVVKQLITEKLMLIKDYIEIKGANVSNENFNYESHNDIEIHLSNDEIITIEIRSSIATKYDLNDILNKDFDILGSYTTSYKSKEHNKDYYFRIIFHNPGDYGYNPHLKKWEYNKRLENAFKQEKNKALDYFKNNVKVYFVGGCTFDDLENYGEHDDLKQKNAEYWIIRPITKGRDVLEILEILEKDILNKLGFL.

This is an uncharacterized protein from Methanocaldococcus jannaschii (strain ATCC 43067 / DSM 2661 / JAL-1 / JCM 10045 / NBRC 100440) (Methanococcus jannaschii).